The following is a 628-amino-acid chain: Carbon monoxide dehydrogenase 1 (628 aa).

[4Fe-4S] cluster is bound by residues cysteine 44, cysteine 52, cysteine 53, cysteine 56, cysteine 61, and cysteine 75. [Ni-4Fe-5S] cluster-binding residues include histidine 266, cysteine 302, cysteine 340, cysteine 448, cysteine 478, and cysteine 519.

This sequence belongs to the Ni-containing carbon monoxide dehydrogenase family. In terms of assembly, homodimer. [4Fe-4S] cluster is required as a cofactor. It depends on [Ni-4Fe-5S] cluster as a cofactor.

It catalyses the reaction CO + 2 oxidized [2Fe-2S]-[ferredoxin] + H2O = 2 reduced [2Fe-2S]-[ferredoxin] + CO2 + 2 H(+). Functionally, CODH oxidizes carbon monoxide coupled, via CooF, to the reduction of a hydrogen cation by a hydrogenase (possibly CooH). The polypeptide is Carbon monoxide dehydrogenase 1 (cooS1) (Methanosarcina acetivorans (strain ATCC 35395 / DSM 2834 / JCM 12185 / C2A)).